Here is a 547-residue protein sequence, read N- to C-terminus: Sodium-coupled neutral amino acid transporter 4 (547 aa).

The interval 1-30 (MDPMELRNVNIEPDDESSSGESAPDSYIGI) is disordered. At 1-104 (MDPMELRNVN…GLSYAMANTG (104 aa)) the chain is on the extracellular side. Serine 49 carries the phosphoserine modification. A helical transmembrane segment spans residues 105-125 (IILFIIMLLAVAILSLYSVHL). Residues 126–151 (LLKTAKEGGSLIYEKLGEKAFGWPGK) are Cytoplasmic-facing. A helical transmembrane segment spans residues 152 to 172 (IGAFVSITMQNIGAMSSYLFI). Topologically, residues 173–195 (IKYELPEVIRAFMGLEENTGEWY) are extracellular. Residues 196-216 (LNGNYLIIFVSVGIILPLSLL) traverse the membrane as a helical segment. Topologically, residues 217 to 220 (KNLG) are cytoplasmic. The chain crosses the membrane as a helical span at residues 221-241 (YLGYTSGFSLTCMVFFVSVVI). Residues 242 to 332 (YKKFQIPCPL…PKYFVFNSRT (91 aa)) are Extracellular-facing. The cysteines at positions 249 and 321 are disulfide-linked. Asparagine 260, asparagine 264, and asparagine 276 each carry an N-linked (GlcNAc...) asparagine glycan. Residues 333-353 (AYAIPILVFAFVCHPEVLPIY) form a helical membrane-spanning segment. Residues 354-369 (SELKDRSRRKMQTVSN) lie on the Cytoplasmic side of the membrane. A helical membrane pass occupies residues 370-390 (ISITGMLVMYLLAALFGYLTF). Over 391-411 (YGEVEDELLHAYSKVYTLDIP) the chain is Extracellular. The helical transmembrane segment at 412–432 (LLMVRLAVLVAVTLTVPIVLF) threads the bilayer. The Cytoplasmic portion of the chain corresponds to 433 to 453 (PIRTSVITLLFPKRPFSWIRH). The helical transmembrane segment at 454–474 (FLIAAVLIALNNVLVILVPTI) threads the bilayer. Residues 475–476 (KY) are Extracellular-facing. The chain crosses the membrane as a helical span at residues 477–497 (IFGFIGASSATMLIFILPAVF). At 498–514 (YLKLVKKETFRSPQKVG) the chain is on the cytoplasmic side. The chain crosses the membrane as a helical span at residues 515–535 (ALIFLVVGIFFMIGSMALIII). Over 536-547 (DWIYDPPNSKHH) the chain is Extracellular.

Belongs to the amino acid/polyamine transporter 2 family. Post-translationally, the disulfide bond plays an important role in substrate transport, but has no effect on trafficking to the cell surface. As to expression, expressed almost exclusively in embryonic and adult liver, and at lower levels in the kidney. Expressed at lower levels in adult muscle and pancreas. Detected in fetal blood vessels. Expressed in syncytiotrophoblas of placenta during first trimester and at term. Highly expressed in first trimester placenta compared to term placenta.

The protein localises to the cell membrane. Its subcellular location is the cell projection. The protein resides in the microvillus membrane. The catalysed reaction is L-methionine(in) + Na(+)(in) = L-methionine(out) + Na(+)(out). The enzyme catalyses L-asparagine(in) + Na(+)(in) = L-asparagine(out) + Na(+)(out). It catalyses the reaction L-threonine(in) + Na(+)(in) = L-threonine(out) + Na(+)(out). It carries out the reaction L-serine(in) + Na(+)(in) = L-serine(out) + Na(+)(out). The catalysed reaction is glycine(in) + Na(+)(in) = glycine(out) + Na(+)(out). The enzyme catalyses L-alanine(in) + Na(+)(in) = L-alanine(out) + Na(+)(out). It catalyses the reaction L-glutamine(in) + Na(+)(in) = L-glutamine(out) + Na(+)(out). It carries out the reaction L-histidine(in) + Na(+)(in) = L-histidine(out) + Na(+)(out). The catalysed reaction is L-cysteine(in) + Na(+)(in) = L-cysteine(out) + Na(+)(out). The enzyme catalyses L-proline(in) + Na(+)(in) = L-proline(out) + Na(+)(out). In terms of biological role, symporter that cotransports neutral amino acids and sodium ions from the extraccellular to the intracellular side of the cell membrane. The transport is electrogenic, pH dependent and partially tolerates substitution of Na(+) by Li(+). Preferentially transports smaller amino acids, such as glycine, L-alanine, L-serine, L-asparagine and L-threonine, followed by L-cysteine, L-histidine, L-proline and L-glutamine and L-methionine. The protein is Sodium-coupled neutral amino acid transporter 4 of Homo sapiens (Human).